A 117-amino-acid polypeptide reads, in one-letter code: uncharacterized protein (117 aa).

This is an uncharacterized protein from Rattus norvegicus (Rat).